The primary structure comprises 319 residues: HPr kinase/phosphorylase (319 aa).

Catalysis depends on residues histidine 144 and lysine 165. 159–166 (GKSGIGKS) provides a ligand contact to ATP. Serine 166 is a binding site for Mg(2+). The active-site Proton acceptor; for phosphorylation activity. Proton donor; for dephosphorylation activity is the aspartate 183. The segment at 207-216 (MEIRGLGVIN) is important for the catalytic mechanism of both phosphorylation and dephosphorylation. Position 208 (glutamate 208) interacts with Mg(2+). Residue arginine 249 is part of the active site. The segment at 270-275 (PVRPGR) is important for the catalytic mechanism of dephosphorylation.

It belongs to the HPrK/P family. Homohexamer. It depends on Mg(2+) as a cofactor.

It carries out the reaction [HPr protein]-L-serine + ATP = [HPr protein]-O-phospho-L-serine + ADP + H(+). The catalysed reaction is [HPr protein]-O-phospho-L-serine + phosphate + H(+) = [HPr protein]-L-serine + diphosphate. Catalyzes the ATP- as well as the pyrophosphate-dependent phosphorylation of a specific serine residue in HPr, a phosphocarrier protein of the phosphoenolpyruvate-dependent sugar phosphotransferase system (PTS). HprK/P also catalyzes the pyrophosphate-producing, inorganic phosphate-dependent dephosphorylation (phosphorolysis) of seryl-phosphorylated HPr (P-Ser-HPr). The polypeptide is HPr kinase/phosphorylase (Geobacter sulfurreducens (strain ATCC 51573 / DSM 12127 / PCA)).